A 695-amino-acid chain; its full sequence is DNA ligase (695 aa).

NAD(+) is bound at residue 30–34 (DADFD). The interval 52-71 (TGASPTEEVAPAPPTSSPFR) is disordered. Residues 81 to 82 (SL) and Glu-106 each bind NAD(+). Lys-108 (N6-AMP-lysine intermediate) is an active-site residue. 4 residues coordinate NAD(+): Arg-129, Glu-169, Lys-285, and Lys-309. 4 residues coordinate Zn(2+): Cys-403, Cys-406, Cys-422, and Cys-428. The BRCT domain occupies 599–688 (VDSALLEGLT…APSSGDDAST (90 aa)). The tract at residues 676 to 695 (ENGAPSSGDDASTSADSVDD) is disordered. Residues 679–695 (APSSGDDASTSADSVDD) are compositionally biased toward low complexity.

This sequence belongs to the NAD-dependent DNA ligase family. LigA subfamily. The cofactor is Mg(2+). Mn(2+) serves as cofactor.

The enzyme catalyses NAD(+) + (deoxyribonucleotide)n-3'-hydroxyl + 5'-phospho-(deoxyribonucleotide)m = (deoxyribonucleotide)n+m + AMP + beta-nicotinamide D-nucleotide.. Its function is as follows. DNA ligase that catalyzes the formation of phosphodiester linkages between 5'-phosphoryl and 3'-hydroxyl groups in double-stranded DNA using NAD as a coenzyme and as the energy source for the reaction. It is essential for DNA replication and repair of damaged DNA. In Corynebacterium jeikeium (strain K411), this protein is DNA ligase.